The primary structure comprises 702 residues: Epsin-1 (702 aa).

The ENTH domain maps to Asn10–Arg142. Composition is skewed to basic and acidic residues over residues His136–Phe160 and Ser183–His192. The segment at His136–Gln285 is disordered. Basic residues predominate over residues Arg193–Arg214. Phosphoserine occurs at positions 212, 216, 218, and 223. UIM domains lie at Glu226–Asp245 and Asp254–Arg273. The segment covering Glu230–Arg248 has biased composition (basic and acidic residues). The residue at position 255 (Ser255) is a Phosphoserine. Positions Ser266–Gln283 are enriched in basic and acidic residues. Phosphothreonine is present on Thr406. Disordered regions lie at residues Asn504–Asp589 and Pro683–Leu702. Over residues Thr514–Leu534 the composition is skewed to polar residues. The span at Gln535–Ser549 shows a compositional bias: low complexity. The segment covering Lys557–Pro577 has biased composition (polar residues). A compositionally biased stretch (low complexity) spans Pro683–Gln695.

The protein belongs to the epsin family.

It localises to the cytoplasm. It is found in the membrane. Functionally, binds to membranes enriched in phosphatidylinositol 3,5-bisphosphate (PtdIns(3,5)P2) and phosphatidylinositol 4,5-bisphosphate (PtdIns(4,5)P2). Required for endocytosis and localization of actin. This is Epsin-1 (ent1) from Schizosaccharomyces pombe (strain 972 / ATCC 24843) (Fission yeast).